A 308-amino-acid polypeptide reads, in one-letter code: Cell division protein FtsQ (308 aa).

Topologically, residues 1-53 are cytoplasmic; it reads MDSGGRIVYALNVEKTGFLRILSVTVLQRLYRRVFWFLFKCVAGIDVPRHAGS. The helical transmembrane segment at 54–74 threads the bilayer; the sequence is LAVFSFFFLSILYSISSGGYM. Residues 75–308 are Periplasmic-facing; the sequence is NHFMKVAISN…LLKMLKAGSV (234 aa). In terms of domain architecture, POTRA spans 87–155; sequence FLVTHVDMSG…DRLRISLVER (69 aa).

This sequence belongs to the FtsQ/DivIB family. FtsQ subfamily.

Its subcellular location is the cell inner membrane. Essential cell division protein. The polypeptide is Cell division protein FtsQ (Bartonella bacilliformis).